The following is a 319-amino-acid chain: Olfactory receptor 8K1 (319 aa).

Topologically, residues 1-31 are extracellular; sequence MNHVVKHNHTAVTKVTEFILMGITDNPGLQA. Asn-8 is a glycosylation site (N-linked (GlcNAc...) asparagine). A helical membrane pass occupies residues 32–52; the sequence is PLFGLFLIIYLVTVIGNLGMV. The Cytoplasmic portion of the chain corresponds to 53–60; the sequence is ILTYLDSK. The helical transmembrane segment at 61–81 threads the bilayer; it reads LHTPMYFFLRHLSITDLGYST. Residues 82–105 lie on the Extracellular side of the membrane; that stretch reads VIAPKMLVNFIVHKNTISYNWYAT. Residues 106 to 126 traverse the membrane as a helical segment; sequence QLAFFEIFIISELFILSAMAY. Residues 127–145 are Cytoplasmic-facing; the sequence is DRYVAICKPLLYVIIMAEK. A helical transmembrane segment spans residues 146–166; the sequence is VLWVLVIVPYLYSTFVSLFLT. The Extracellular portion of the chain corresponds to 167-203; sequence IKLFKLSFCGSNIISYFYCDCIPLMSILCSDTNELEL. Residues 204 to 223 form a helical membrane-spanning segment; the sequence is IILIFSGCNLLFSLSIVLIS. Residues 224–243 are Cytoplasmic-facing; it reads YMFILVAILRMNSRKGRYKA. A helical transmembrane segment spans residues 244–264; that stretch reads FSTCSSHLTVVIMFYGTLLFI. Topologically, residues 265-277 are extracellular; the sequence is YLQPKSSHTLAID. Residues 278–298 traverse the membrane as a helical segment; it reads KMASVFYTLLIPMLNPLIYSL. Residues 299 to 319 lie on the Cytoplasmic side of the membrane; it reads RNKEVKDALKRTLTNRFKIPI.

The protein belongs to the G-protein coupled receptor 1 family.

Its subcellular location is the cell membrane. Its function is as follows. Odorant receptor. The protein is Olfactory receptor 8K1 (OR8K1) of Homo sapiens (Human).